A 278-amino-acid chain; its full sequence is Formamidopyrimidine-DNA glycosylase (278 aa).

The active-site Schiff-base intermediate with DNA is Pro-2. The Proton donor role is filled by Glu-3. Lys-59 serves as the catalytic Proton donor; for beta-elimination activity. DNA-binding residues include His-93, Arg-112, and Arg-153. The segment at 238-272 (NVYDRAGEPCPRCQSTIERIVVAQRSTYFCPTCQI) adopts an FPG-type zinc-finger fold. Arg-262 (proton donor; for delta-elimination activity) is an active-site residue.

It belongs to the FPG family. In terms of assembly, monomer. Requires Zn(2+) as cofactor.

The enzyme catalyses Hydrolysis of DNA containing ring-opened 7-methylguanine residues, releasing 2,6-diamino-4-hydroxy-5-(N-methyl)formamidopyrimidine.. It catalyses the reaction 2'-deoxyribonucleotide-(2'-deoxyribose 5'-phosphate)-2'-deoxyribonucleotide-DNA = a 3'-end 2'-deoxyribonucleotide-(2,3-dehydro-2,3-deoxyribose 5'-phosphate)-DNA + a 5'-end 5'-phospho-2'-deoxyribonucleoside-DNA + H(+). Its function is as follows. Involved in base excision repair of DNA damaged by oxidation or by mutagenic agents. Acts as a DNA glycosylase that recognizes and removes damaged bases. Has a preference for oxidized purines, such as 7,8-dihydro-8-oxoguanine (8-oxoG). Has AP (apurinic/apyrimidinic) lyase activity and introduces nicks in the DNA strand. Cleaves the DNA backbone by beta-delta elimination to generate a single-strand break at the site of the removed base with both 3'- and 5'-phosphates. The chain is Formamidopyrimidine-DNA glycosylase from Chloroflexus aurantiacus (strain ATCC 29366 / DSM 635 / J-10-fl).